Reading from the N-terminus, the 119-residue chain is MARVKRGVTAHAKHKKVYKLAKGYRGRRKNTIRTAKAAVDKAGQYAFRDRKRKKRTFRALWIQRLNAAVRPFGMTYSVFINGLSKSGIVVDRKVLSDLAINEPAAFQAIAEKAKAALAA.

This sequence belongs to the bacterial ribosomal protein bL20 family.

Functionally, binds directly to 23S ribosomal RNA and is necessary for the in vitro assembly process of the 50S ribosomal subunit. It is not involved in the protein synthesizing functions of that subunit. This Rhodopseudomonas palustris (strain ATCC BAA-98 / CGA009) protein is Large ribosomal subunit protein bL20.